The following is a 593-amino-acid chain: Kelch-like protein 2 (593 aa).

Residues 1–28 (METPPLPPACTKQGHQKPLDSKDDNTEK) form a disordered region. Residues 17–28 (KPLDSKDDNTEK) show a composition bias toward basic and acidic residues. Residues 56–123 (CDVTIVAEDM…VYTAEIQVTE (68 aa)) enclose the BTB domain. Kelch repeat units lie at residues 308-353 (LMVV…YMAG), 354-400 (LVFA…VLNG), 402-447 (LYAV…VVGG), 449-496 (LYAV…VLNN), 497-543 (LLYA…AVNG), and 545-591 (LYVV…VIDK).

Component of the BCR(KLHL2) E3 ubiquitin ligase complex, at least composed of CUL3 and KLHL2 and RBX1. Binds actin. Interacts with KLHL12. Interacts (via N-terminus) with FYN (via SH3 domain). As to expression, ubiquitous. Detected throughout the brain.

It localises to the cytoplasm. The protein resides in the cytoskeleton. The protein localises to the cell projection. Its subcellular location is the ruffle. It is found in the lamellipodium. It localises to the cytosol. The protein operates within protein modification; protein ubiquitination. Its function is as follows. Substrate-specific adapter of a BCR (BTB-CUL3-RBX1) E3 ubiquitin ligase complex that mediates the ubiquitination of target proteins, such as NPTXR, WNK1, WNK3 and WNK4, leading most often to their proteasomal degradation. The BCR(KLHL2) complex catalyzes ubiquitination and degradation of NPTXR. Responsible for degradative ubiquitination of the WNK kinases WNK1, WNK3 and WNK4. Plays a role in the reorganization of the actin cytoskeleton. Promotes growth of cell projections in oligodendrocyte precursors. The sequence is that of Kelch-like protein 2 from Homo sapiens (Human).